The primary structure comprises 177 residues: Thymidine kinase (177 aa).

Residue 11 to 18 (GPMFSGKS) participates in ATP binding. Glu83 serves as the catalytic Proton acceptor. Residue Phe113 coordinates substrate. Zn(2+)-binding residues include Cys138 and Cys141. Position 157–161 (157–161 (IEIIG)) interacts with substrate. Cys170 and Cys173 together coordinate Zn(2+).

It belongs to the thymidine kinase family. As to quaternary structure, homotetramer. Two molecules of substrate bind to each enzyme tetramer.

It catalyses the reaction thymidine + ATP = dTMP + ADP + H(+). Its function is as follows. Phosphorylates thymidine and thymidine analogs, such as azidothymidine (AZT). Part of the salvage pathway for pyrimidine deoxyribonucleotide synthesis. The chain is Thymidine kinase (OPG101) from Vaccinia virus (strain Tian Tan) (VACV).